A 435-amino-acid polypeptide reads, in one-letter code: Glutamyl-tRNA reductase (435 aa).

Substrate contacts are provided by residues 49 to 52 (TCNR), serine 109, 114 to 116 (ETQ), and glutamine 120. The Nucleophile role is filled by cysteine 50. Position 189–194 (189–194 (GAGEMS)) interacts with NADP(+).

Belongs to the glutamyl-tRNA reductase family. In terms of assembly, homodimer.

The catalysed reaction is (S)-4-amino-5-oxopentanoate + tRNA(Glu) + NADP(+) = L-glutamyl-tRNA(Glu) + NADPH + H(+). It functions in the pathway porphyrin-containing compound metabolism; protoporphyrin-IX biosynthesis; 5-aminolevulinate from L-glutamyl-tRNA(Glu): step 1/2. Functionally, catalyzes the NADPH-dependent reduction of glutamyl-tRNA(Glu) to glutamate 1-semialdehyde (GSA). In Listeria innocua serovar 6a (strain ATCC BAA-680 / CLIP 11262), this protein is Glutamyl-tRNA reductase.